Consider the following 300-residue polypeptide: Histone deacetylase HDT3 (300 aa).

Over residues 98 to 112 (EDEMDLDSEDEDEEL) the composition is skewed to acidic residues. The segment at 98–300 (EDEMDLDSED…AHSKAKHGGK (203 aa)) is disordered. Positions 119–132 (ENGKADEKKQKSQE) are enriched in basic and acidic residues. Residues 151–197 (DDDSDEDETDDSDEDETDDSDEGLSPEEGDDDSSDEDDTSDDEEEDT) show a composition bias toward acidic residues. Over residues 198-211 (PTPKKPEVGKKRAA) the composition is skewed to basic and acidic residues. Residues 265-275 (SPKSAPKSGVP) are compositionally biased toward low complexity. The C2H2-type zinc-finger motif lies at 274–297 (VPCKSCSKSFISETAPQAHSKAKH). A compositionally biased stretch (polar residues) spans 279–290 (CSKSFISETAPQ).

Belongs to the histone deacetylase HD2 family. In terms of assembly, multimer. Possibly forms a homotrimer with HDT1 and/or HDT2.

The protein localises to the nucleus. It localises to the nucleolus. Functionally, mediates the deacetylation of lysine residues on the N-terminal part of the core histones (H2A, H2B, H3 and H4). Histone deacetylation gives a tag for epigenetic repression and plays an important role in transcriptional regulation, cell cycle progression and developmental events. This chain is Histone deacetylase HDT3 (HDT3), found in Zea mays (Maize).